The following is an 87-amino-acid chain: Small ribosomal subunit protein bS20 (87 aa).

The protein belongs to the bacterial ribosomal protein bS20 family.

In terms of biological role, binds directly to 16S ribosomal RNA. The polypeptide is Small ribosomal subunit protein bS20 (Roseobacter denitrificans (strain ATCC 33942 / OCh 114) (Erythrobacter sp. (strain OCh 114))).